The sequence spans 258 residues: Zinc import ATP-binding protein ZnuC (258 aa).

Positions 7–233 constitute an ABC transporter domain; that stretch reads ITAKNINHAY…PAFQELFGQG (227 aa). ATP is bound at residue 39 to 46; that stretch reads GPNGAGKS.

Belongs to the ABC transporter superfamily. Zinc importer (TC 3.A.1.15.5) family. In terms of assembly, the complex is composed of two ATP-binding proteins (ZnuC), two transmembrane proteins (ZnuB) and a solute-binding protein (ZnuA).

It localises to the cell inner membrane. It carries out the reaction Zn(2+)(out) + ATP(in) + H2O(in) = Zn(2+)(in) + ADP(in) + phosphate(in) + H(+)(in). Part of the ABC transporter complex ZnuABC involved in zinc import. Responsible for energy coupling to the transport system. The sequence is that of Zinc import ATP-binding protein ZnuC from Hydrogenovibrio crunogenus (strain DSM 25203 / XCL-2) (Thiomicrospira crunogena).